Reading from the N-terminus, the 323-residue chain is tRNA U34 carboxymethyltransferase (323 aa).

Carboxy-S-adenosyl-L-methionine contacts are provided by residues Lys-91, Trp-105, Lys-110, Gly-130, 152–154 (DPT), 181–182 (IE), Met-196, Tyr-200, and Arg-315.

This sequence belongs to the class I-like SAM-binding methyltransferase superfamily. CmoB family. In terms of assembly, homotetramer.

It catalyses the reaction carboxy-S-adenosyl-L-methionine + 5-hydroxyuridine(34) in tRNA = 5-carboxymethoxyuridine(34) in tRNA + S-adenosyl-L-homocysteine + H(+). Functionally, catalyzes carboxymethyl transfer from carboxy-S-adenosyl-L-methionine (Cx-SAM) to 5-hydroxyuridine (ho5U) to form 5-carboxymethoxyuridine (cmo5U) at position 34 in tRNAs. This is tRNA U34 carboxymethyltransferase from Cronobacter sakazakii (strain ATCC BAA-894) (Enterobacter sakazakii).